The following is a 1266-amino-acid chain: TBC1 domain family member 9 (1266 aa).

2 consecutive GRAM domains span residues 146–213 and 293–361; these read VKFH…EKNA and ERYR…EKAD. The segment at 415–456 is disordered; the sequence is SYNSSDDEVYSRPSSLVSSSPQRSTSSDADGERQFNLNGNSV. The segment covering 425–441 has biased composition (low complexity); the sequence is SRPSSLVSSSPQRSTSS. The Rab-GAP TBC domain maps to 515–702; the sequence is GIPESMRGEL…VVVDCFFYEG (188 aa). An EF-hand domain is found at 886-921; the sequence is HSDVLASRLFQLLDENGDSLINFREFVSGLSAACHG. Disordered regions lie at residues 1075 to 1095 and 1132 to 1164; these read AKEGGSGGSGPSCHQGIPGVL and DIKLEDSSPRDNGACSSMLISDDDTKDDSSMSS.

May act as a GTPase-activating protein for Rab family protein(s). The chain is TBC1 domain family member 9 (TBC1D9) from Homo sapiens (Human).